We begin with the raw amino-acid sequence, 397 residues long: CCA-adding enzyme (397 aa).

G26 and R29 together coordinate ATP. CTP-binding residues include G26 and R29. Mg(2+) is bound by residues D39 and D41. R110, D153, R156, R159, and R162 together coordinate ATP. CTP contacts are provided by R110, D153, R156, R159, and R162.

The protein belongs to the tRNA nucleotidyltransferase/poly(A) polymerase family. Bacterial CCA-adding enzyme type 3 subfamily. As to quaternary structure, homodimer. Mg(2+) serves as cofactor.

The enzyme catalyses a tRNA precursor + 2 CTP + ATP = a tRNA with a 3' CCA end + 3 diphosphate. It carries out the reaction a tRNA with a 3' CCA end + 2 CTP + ATP = a tRNA with a 3' CCACCA end + 3 diphosphate. Catalyzes the addition and repair of the essential 3'-terminal CCA sequence in tRNAs without using a nucleic acid template. Adds these three nucleotides in the order of C, C, and A to the tRNA nucleotide-73, using CTP and ATP as substrates and producing inorganic pyrophosphate. tRNA 3'-terminal CCA addition is required both for tRNA processing and repair. Also involved in tRNA surveillance by mediating tandem CCA addition to generate a CCACCA at the 3' terminus of unstable tRNAs. While stable tRNAs receive only 3'-terminal CCA, unstable tRNAs are marked with CCACCA and rapidly degraded. This chain is CCA-adding enzyme, found in Bacillus cereus (strain ZK / E33L).